Consider the following 550-residue polypeptide: Acetyl-coenzyme A transporter 1 (550 aa).

Basic and acidic residues-rich tracts occupy residues 1-12 and 36-52; these read MSPTISHKDSSR and DDSRRDSVGGEGDREVL. Positions 1-58 are disordered; that stretch reads MSPTISHKDSSRQRRSGMFSHALDMKSGPLPPGGWDDSRRDSVGGEGDREVLLGDAGP. Over 1–74 the chain is Cytoplasmic; sequence MSPTISHKDS…PRSYRSELSS (74 aa). Ser-42 is modified (phosphoserine). The chain crosses the membrane as a helical span at residues 75-95; it reads ILLLLFLYVLQGIPLGLAGSI. The Extracellular segment spans residues 96–113; it reads PLILQSKNVSYTDQAFFS. Asn-103 is a glycosylation site (N-linked (GlcNAc...) asparagine). Residues 114 to 134 form a helical membrane-spanning segment; sequence FVFWPFSLKLLWAPLVDAVYF. Residues 135–141 lie on the Cytoplasmic side of the membrane; that stretch reads KNFGRRK. Residues 142-162 form a helical membrane-spanning segment; the sequence is SWLVPTQYTLGIFMIYLSTQV. Topologically, residues 163–175 are extracellular; it reads DRLLGNIDGRTPD. The helical transmembrane segment at 176-196 threads the bilayer; it reads VVALTVTFFLFEFLAATQDIA. Residues 197 to 217 lie on the Cytoplasmic side of the membrane; the sequence is VDGWALTMLSRENVGYASTCN. The helical transmembrane segment at 218-238 threads the bilayer; that stretch reads SVGQTAGYFLGNVLFLALESA. Over 239 to 256 the chain is Extracellular; sequence DFCNKYLRFQPQPRGIVT. The chain crosses the membrane as a helical span at residues 257-277; it reads LSDFLFFWGTVFLITTTLVAL. Over 278–300 the chain is Cytoplasmic; the sequence is LKKENREASIVKEETQGITDTYK. The chain crosses the membrane as a helical span at residues 301–321; that stretch reads LLFSIIKMPAVLAFCLLILTS. Residues 322–344 are Extracellular-facing; sequence KIGFSAADAVTGLKLVEEGVPKE. Residues 345–365 traverse the membrane as a helical segment; the sequence is HLALLAVPMVPLQIILPLLIS. Topologically, residues 366 to 375 are cytoplasmic; it reads KYTAGPQPLN. A helical transmembrane segment spans residues 376–396; it reads IFYKAMPYRLLLGLEYALLVW. Over 397–405 the chain is Extracellular; that stretch reads WTPKVEHQG. A helical membrane pass occupies residues 406 to 426; the sequence is GFPLYYYIIVLLSYALHQVTL. At 427–509 the chain is on the cytoplasmic side; it reads YSMYVSIMAF…LGGSCVTALD (83 aa). Residues 510 to 530 form a helical membrane-spanning segment; that stretch reads GYYVESIICVLIGFGWWFFLG. Over 531–550 the chain is Extracellular; the sequence is PKFKKLQDEGPSSWKCKRNN.

This sequence belongs to the SLC33A transporter family. Homodimerizes. As to expression, expressed in all adult tissues examined including brain, heart, kidney, liver and spleen, with maximum expression in liver and kidney.

The protein localises to the endoplasmic reticulum membrane. It carries out the reaction acetyl-CoA(in) = acetyl-CoA(out). Functionally, acetyl-CoA transporter that mediates active acetyl-CoA import through the endoplasmic reticulum (ER) membrane into the ER lumen where specific ER-based acetyl-CoA:lysine acetyltransferases are responsible for the acetylation of ER-based protein substrate, such as BACE1. Necessary for O-acetylation of gangliosides. In Mus musculus (Mouse), this protein is Acetyl-coenzyme A transporter 1 (Slc33a1).